Consider the following 29-residue polypeptide: Beta-theraphotoxin-Gr1a (29 aa).

3 cysteine pairs are disulfide-bonded: Cys-2–Cys-16, Cys-9–Cys-21, and Cys-15–Cys-25.

The protein belongs to the neurotoxin 30 (phrixotoxin) family. In terms of tissue distribution, expressed by the venom gland.

The protein localises to the secreted. Its function is as follows. Inhibits voltage-gated sodium channels Nav1.1/SCN1A (IC(50)=630 nM), Nav1.2/SCN2A (IC(50)=230 nM), Nav1.3/SCN3A (IC(50)=770 nM), Nav1.4/SCN4A (IC(50)=1290 nM), Nav1.6/SCN8A (IC(50)=630 nM), Nav1.7/SCN9A (IC(50)=15.3-1000 nM) and potassium channels Kv11.1/KCNH2 (IC(50)=4.2 uM). This Grammostola rosea (Chilean rose tarantula) protein is Beta-theraphotoxin-Gr1a.